The following is a 1615-amino-acid chain: ABC transporter A family member 4 (1615 aa).

Helical transmembrane passes span 30 to 50 (ILLPLISIGILFGILYLSMII), 233 to 253 (GVFITASLFATLFTLITNIVI), 278 to 298 (SIISLITLLSSTLLVSIILSA), 308 to 328 (ITLILILIPYSITLLLIAFIL), 337 to 357 (YAGLMAFLIVLLLSGIGIIIG), 365 to 385 (LKLLSCLFSPIAISVANYVWC), and 405 to 425 (YEIIGMLVFDIFLYILILWYL). An ABC transmembrane type-2 domain is found at 182 to 383 (TQIQTGVDQA…PIAISVANYV (202 aa)). Residues 492 to 727 (ISIRNLRKEF…FGVGYLLTIS (236 aa)) enclose the ABC transporter 1 domain. ATP is bound at residue 528–535 (GPNGSGKS). 7 helical membrane passes run 855-875 (IKSFVLSILIPILILAGGLIL), 1022-1042 (FVAIVFFIILTLASFSLIAAS), 1075-1095 (IWDYLQTFILVIFLTIVIIAV), 1106-1126 (YISGVVLFTFSIIPLSYLMSF), 1135-1155 (VGAIFAIHFGVGLIFTVISFI), 1174-1194 (IIEYCFYAISPFFCFSKILAI), and 1218-1238 (LLPNAILFLHCIVWITWILLI). The 236-residue stretch at 1293–1528 (IIFNNLYKKF…FGSGYSIEVK (236 aa)) folds into the ABC transporter 2 domain. 1331–1338 (GLNGCGKS) contributes to the ATP binding site.

It belongs to the ABC transporter superfamily. ABCA family.

The protein localises to the membrane. The polypeptide is ABC transporter A family member 4 (abcA4) (Dictyostelium discoideum (Social amoeba)).